We begin with the raw amino-acid sequence, 481 residues long: Tryptophan--tRNA ligase, cytoplasmic (481 aa).

The WHEP-TRS domain maps to 12–68 (SPLELFNSIATQGELVRSLKAGNAPKDEIDSAVKMLLSLKMSYKAAMGEEYKAGCPP). Lysine 158 carries the N6-succinyllysine modification. The 'HIGH' region signature appears at 168–177 (PSSEAMHLGH). Residues 353 to 357 (KMSAS) carry the 'KMSKS' region motif. At serine 355 the chain carries Phosphoserine.

The protein belongs to the class-I aminoacyl-tRNA synthetase family. In terms of assembly, homodimer. Interacts with oxidized form of GAPDH. In terms of processing, proteolytic cleavage generates 2 forms; T1-TrpRS and T2-TrpRS. As to expression, isoform 2 is widely expressed, isoform 1 is found only in embryonic stem cells.

It is found in the cytoplasm. The enzyme catalyses tRNA(Trp) + L-tryptophan + ATP = L-tryptophyl-tRNA(Trp) + AMP + diphosphate + H(+). Its function is as follows. Catalyzes the attachment of tryptophan to tRNA(Trp) in a two-step reaction: tryptophan is first activated by ATP to form Trp-AMP and then transferred to the acceptor end of the tRNA(Trp). Could also possess an angiostatic activity. This Mus musculus (Mouse) protein is Tryptophan--tRNA ligase, cytoplasmic.